Here is a 148-residue protein sequence, read N- to C-terminus: NADH-quinone oxidoreductase subunit K 2 (148 aa).

3 helical membrane passes run 3-23 (LAYP…GVLA), 28-48 (ILVL…LVAF), and 64-84 (LFTI…VLAV). A disordered region spans residues 96–148 (LRDTAETDAAETLPDDAGTGPSGTDAAPNGDTTTATGRPGDNAGKNKKAEATR).

The protein belongs to the complex I subunit 4L family. In terms of assembly, NDH-1 is composed of 14 different subunits. Subunits NuoA, H, J, K, L, M, N constitute the membrane sector of the complex.

The protein resides in the cell membrane. It catalyses the reaction a quinone + NADH + 5 H(+)(in) = a quinol + NAD(+) + 4 H(+)(out). Functionally, NDH-1 shuttles electrons from NADH, via FMN and iron-sulfur (Fe-S) centers, to quinones in the respiratory chain. The immediate electron acceptor for the enzyme in this species is believed to be a menaquinone. Couples the redox reaction to proton translocation (for every two electrons transferred, four hydrogen ions are translocated across the cytoplasmic membrane), and thus conserves the redox energy in a proton gradient. This is NADH-quinone oxidoreductase subunit K 2 from Streptomyces griseus subsp. griseus (strain JCM 4626 / CBS 651.72 / NBRC 13350 / KCC S-0626 / ISP 5235).